The primary structure comprises 238 residues: Uridylate kinase (238 aa).

ATP is bound at residue 12 to 15; sequence KLSG. The involved in allosteric activation by GTP stretch occupies residues 20–25; it reads GEKGFG. Glycine 54 contacts UMP. Positions 55 and 59 each coordinate ATP. Residues aspartate 74 and 135-142 each bind UMP; that span reads TGSPYFST. Asparagine 163, tyrosine 169, and aspartate 172 together coordinate ATP.

It belongs to the UMP kinase family. In terms of assembly, homohexamer.

The protein resides in the cytoplasm. The catalysed reaction is UMP + ATP = UDP + ADP. It functions in the pathway pyrimidine metabolism; CTP biosynthesis via de novo pathway; UDP from UMP (UMPK route): step 1/1. With respect to regulation, allosterically activated by GTP. Inhibited by UTP. Its function is as follows. Catalyzes the reversible phosphorylation of UMP to UDP. The chain is Uridylate kinase from Lactococcus lactis subsp. lactis (strain IL1403) (Streptococcus lactis).